The primary structure comprises 303 residues: MSKRPDWIKVKAPNSSEYYNTKDLIKNLKLNTVCEEAACPNIGECWSKKHATVMILGSVCTRACRFCNVKTGRPDLLDPHEPQRLAEAVQKLGLKHVVITSVDRDDLEDGGATHFAECISEIRKSSPNTTIEILTPDFLRKDGAAEIIANAKPDVFNHNVETVPSLYNTIRPGARYYNSLSLLHNIKKLSPEVFTKSGMMVGLGEEISEVVQVMDDLREAKVDFLTIGQYLQPTKNHAEVAKYVTPEEFKYLERVARTKGFLMVSASPLTRSSYHADEDFEKLKENYRHRHCEERRSIDVAIS.

Residues cysteine 34, cysteine 39, cysteine 45, cysteine 60, cysteine 64, cysteine 67, and serine 273 each contribute to the [4Fe-4S] cluster site. The Radical SAM core domain occupies tryptophan 46–leucine 262.

It belongs to the radical SAM superfamily. Lipoyl synthase family. [4Fe-4S] cluster serves as cofactor.

The protein localises to the cytoplasm. The enzyme catalyses [[Fe-S] cluster scaffold protein carrying a second [4Fe-4S](2+) cluster] + N(6)-octanoyl-L-lysyl-[protein] + 2 oxidized [2Fe-2S]-[ferredoxin] + 2 S-adenosyl-L-methionine + 4 H(+) = [[Fe-S] cluster scaffold protein] + N(6)-[(R)-dihydrolipoyl]-L-lysyl-[protein] + 4 Fe(3+) + 2 hydrogen sulfide + 2 5'-deoxyadenosine + 2 L-methionine + 2 reduced [2Fe-2S]-[ferredoxin]. The protein operates within protein modification; protein lipoylation via endogenous pathway; protein N(6)-(lipoyl)lysine from octanoyl-[acyl-carrier-protein]: step 2/2. Its function is as follows. Catalyzes the radical-mediated insertion of two sulfur atoms into the C-6 and C-8 positions of the octanoyl moiety bound to the lipoyl domains of lipoate-dependent enzymes, thereby converting the octanoylated domains into lipoylated derivatives. The polypeptide is Lipoyl synthase (Rickettsia bellii (strain OSU 85-389)).